We begin with the raw amino-acid sequence, 202 residues long: Large ribosomal subunit protein eL13 (202 aa).

This sequence belongs to the eukaryotic ribosomal protein eL13 family.

This chain is Large ribosomal subunit protein eL13 (RPL13), found in Nicotiana tabacum (Common tobacco).